The chain runs to 374 residues: Guanine nucleotide-binding protein subunit alpha-15 (374 aa).

A G-alpha domain is found at 41-374; the sequence is GELKLLLLGP…ARYLDEINLL (334 aa). A G1 motif region spans residues 44 to 57; sequence KLLLLGPGESGKST. Residues 49-56, 183-189, 208-212, 277-280, and alanine 346 each bind GTP; these read GPGESGKS, LRSRMPT, DAGGQ, and NKTD. Serine 56 and threonine 189 together coordinate Mg(2+). Residues 181–189 form a G2 motif region; sequence DVLRSRMPT. The tract at residues 204-213 is G3 motif; the sequence is LRIVDAGGQK. Residues 273 to 280 are G4 motif; the sequence is ILFLNKTD. The segment at 344 to 349 is G5 motif; that stretch reads TCATDT.

Belongs to the G-alpha family. G(q) subfamily. In terms of assembly, g proteins are composed of 3 units; alpha, beta and gamma. The alpha chain contains the guanine nucleotide binding site.

Guanine nucleotide-binding proteins (G proteins) are involved as modulators or transducers in various transmembrane signaling systems. This chain is Guanine nucleotide-binding protein subunit alpha-15 (Gna15), found in Rattus norvegicus (Rat).